The sequence spans 276 residues: MKEFNTRQIVEKYNFRFSKRLGQNFLTDNTVLDDIVENAEIQKDDFIIEIGPGVGTLTRRLLEKAKKVCAIELDESLIPIITNEMKEYDNFTLIHNDALKVDFNNIIGEEQSVKLVANLPYYVTTPIISKLLNEGYNFKSLTIMIQKEVGDRIAAKPSTKDYGALTLLVQYYCDVKVVRVVKPSCFIPQPKVDSLVIRLDKLEKPRVQVKDEKLFFNVIRSAFNMRRKTLWNAMKGLKLSSEDLEKAFEAAGIDSKRRGETLSIEEFGKLSDEIYR.

6 residues coordinate S-adenosyl-L-methionine: asparagine 24, leucine 26, glycine 51, glutamate 72, aspartate 97, and asparagine 118.

Belongs to the class I-like SAM-binding methyltransferase superfamily. rRNA adenine N(6)-methyltransferase family. RsmA subfamily.

It localises to the cytoplasm. The enzyme catalyses adenosine(1518)/adenosine(1519) in 16S rRNA + 4 S-adenosyl-L-methionine = N(6)-dimethyladenosine(1518)/N(6)-dimethyladenosine(1519) in 16S rRNA + 4 S-adenosyl-L-homocysteine + 4 H(+). Specifically dimethylates two adjacent adenosines (A1518 and A1519) in the loop of a conserved hairpin near the 3'-end of 16S rRNA in the 30S particle. May play a critical role in biogenesis of 30S subunits. The protein is Ribosomal RNA small subunit methyltransferase A of Clostridium acetobutylicum (strain ATCC 824 / DSM 792 / JCM 1419 / IAM 19013 / LMG 5710 / NBRC 13948 / NRRL B-527 / VKM B-1787 / 2291 / W).